Consider the following 129-residue polypeptide: Succinate dehydrogenase assembly factor 3, mitochondrial (129 aa).

Belongs to the complex I LYR family. SDHAF3 subfamily. In terms of assembly, interacts with the iron-sulfur protein subunit within the SDH catalytic dimer.

The protein resides in the mitochondrion matrix. Functionally, plays an essential role in the assembly of succinate dehydrogenase (SDH), an enzyme complex (also referred to as respiratory complex II) that is a component of both the tricarboxylic acid (TCA) cycle and the mitochondrial electron transport chain, and which couples the oxidation of succinate to fumarate with the reduction of ubiquinone (coenzyme Q) to ubiquinol. Promotes maturation of the iron-sulfur protein subunit of the SDH catalytic dimer, protecting it from the deleterious effects of oxidants. May act together with SDHAF1. The polypeptide is Succinate dehydrogenase assembly factor 3, mitochondrial (Aspergillus fumigatus (strain ATCC MYA-4609 / CBS 101355 / FGSC A1100 / Af293) (Neosartorya fumigata)).